Consider the following 369-residue polypeptide: GTPase Obg (369 aa).

Residues 1–159 enclose the Obg domain; sequence MKFIDEAKIE…RELRLELKVL (159 aa). The disordered stretch occupies residues 128–148; it reads IHFKSSTNRAPRQKSEGKEGE. Residues 160–333 form the OBG-type G domain; sequence ADIGLLGMPN…LVTEIYEYIA (174 aa). GTP is bound by residues 166 to 173, 191 to 195, 213 to 216, 283 to 286, and 314 to 316; these read GMPNAGKS, FTTLH, DIPG, NKLD, and SAL. S173 and T193 together coordinate Mg(2+).

Belongs to the TRAFAC class OBG-HflX-like GTPase superfamily. OBG GTPase family. As to quaternary structure, monomer. It depends on Mg(2+) as a cofactor.

Its subcellular location is the cytoplasm. Functionally, an essential GTPase which binds GTP, GDP and possibly (p)ppGpp with moderate affinity, with high nucleotide exchange rates and a fairly low GTP hydrolysis rate. Plays a role in control of the cell cycle, stress response, ribosome biogenesis and in those bacteria that undergo differentiation, in morphogenesis control. This Janthinobacterium sp. (strain Marseille) (Minibacterium massiliensis) protein is GTPase Obg.